The sequence spans 607 residues: UvrABC system protein C (607 aa).

Residues 15–94 enclose the GIY-YIG domain; it reads ENPGVYLMKN…IKRHRPYFNV (80 aa). The UVR domain maps to 204–239; sequence DQVLKLLIRLMNEASARLDYETAALRRDQIASIKEV.

It belongs to the UvrC family. In terms of assembly, interacts with UvrB in an incision complex.

It is found in the cytoplasm. Its function is as follows. The UvrABC repair system catalyzes the recognition and processing of DNA lesions. UvrC both incises the 5' and 3' sides of the lesion. The N-terminal half is responsible for the 3' incision and the C-terminal half is responsible for the 5' incision. The protein is UvrABC system protein C of Dehalococcoides mccartyi (strain ATCC BAA-2100 / JCM 16839 / KCTC 5957 / BAV1).